Consider the following 220-residue polypeptide: Large ribosomal subunit protein uL16 (220 aa).

Belongs to the universal ribosomal protein uL16 family. As to quaternary structure, component of the large ribosomal subunit. Mature ribosomes consist of a small (40S) and a large (60S) subunit. The 40S subunit contains about 32 different proteins and 1 molecule of RNA (18S). The 60S subunit contains 45 different proteins and 3 molecules of RNA (25S, 5.8S and 5S).

It is found in the cytoplasm. In terms of biological role, component of the ribosome, a large ribonucleoprotein complex responsible for the synthesis of proteins in the cell. The small ribosomal subunit (SSU) binds messenger RNAs (mRNAs) and translates the encoded message by selecting cognate aminoacyl-transfer RNA (tRNA) molecules. The large subunit (LSU) contains the ribosomal catalytic site termed the peptidyl transferase center (PTC), which catalyzes the formation of peptide bonds, thereby polymerizing the amino acids delivered by tRNAs into a polypeptide chain. The nascent polypeptides leave the ribosome through a tunnel in the LSU and interact with protein factors that function in enzymatic processing, targeting, and the membrane insertion of nascent chains at the exit of the ribosomal tunnel. This Candida albicans (strain SC5314 / ATCC MYA-2876) (Yeast) protein is Large ribosomal subunit protein uL16.